We begin with the raw amino-acid sequence, 185 residues long: Putative manganese efflux pump MntP (185 aa).

6 helical membrane-spanning segments follow: residues 8 to 28 (LFVI…SIGL), 42 to 62 (ISFG…GVLF), 66 to 86 (ILVI…ILML), 103 to 123 (MYFI…FTVL), 137 to 157 (IFIG…SGYL), and 165 to 185 (KYAN…MIFM).

The protein belongs to the MntP (TC 9.B.29) family.

The protein localises to the cell membrane. Probably functions as a manganese efflux pump. The chain is Putative manganese efflux pump MntP from Clostridium novyi (strain NT).